The chain runs to 532 residues: Chaperonin GroEL 2 (532 aa).

Residues 30–33, Lys-51, 87–91, Gly-415, 479–481, and Asp-495 contribute to the ATP site; these read TLGP, DGTTT, and NAA.

It belongs to the chaperonin (HSP60) family. As to quaternary structure, forms a cylinder of 14 subunits composed of two heptameric rings stacked back-to-back. Interacts with the co-chaperonin GroES.

It is found in the cytoplasm. It catalyses the reaction ATP + H2O + a folded polypeptide = ADP + phosphate + an unfolded polypeptide.. In terms of biological role, together with its co-chaperonin GroES, plays an essential role in assisting protein folding. The GroEL-GroES system forms a nano-cage that allows encapsulation of the non-native substrate proteins and provides a physical environment optimized to promote and accelerate protein folding. This is Chaperonin GroEL 2 from Vibrio parahaemolyticus serotype O3:K6 (strain RIMD 2210633).